An 88-amino-acid polypeptide reads, in one-letter code: Small ribosomal subunit protein bS20 (88 aa).

Belongs to the bacterial ribosomal protein bS20 family.

Functionally, binds directly to 16S ribosomal RNA. The protein is Small ribosomal subunit protein bS20 of Maricaulis maris (strain MCS10) (Caulobacter maris).